Reading from the N-terminus, the 758-residue chain is MADDSLLLNFSLGDNNIIQPETKLKGGTWRDRLSAKKIAKHHAKGPRTAGDEDSAPRAPRNPNRIEVPSSRPTKRQRTDGGDSGKQQSHGHPHSNQPRQFISSLFTKNPEPQKAEEVKEEGHVENAKPTNAPLIDGLDTFTNLGLSPNLAAHLLTKLELKAPTAIQKASISQLLKEEGDAFIQAETGSGKTLAYLLPLVQRIMALSKPGAQTDATGQPIVHRDSGLFAIVLAPTRELCKQISVVLENLLRCAHWIVAGTVIGGEKKKSEKARLRKGLNILVATPGRLADHLDNTQALDVSNVRWLVLDEGDRLMELGFEEEIQGIVKKLDARQRPSRIPGIPARRTTILCSATLKMSVQKLGEISLKDAVHIKADPEDEDEKARRSKAEESAYRVPAQLKQSYAVVAAKLRLVTLTAFFKRTFMRKGSVMKAIIFVSCADSVDFHFEVFTRKQVKEDGGEPSDTDKSEEKPPSSPHGTIAPATAFSNPSNPVTLFRLHGSLPQNVRTSTLGAFAKNKEASVLICTDVASRGLDLPNVDLVVEYDPAFSAEDHLHRIGRTARVGRDGRALIFLQPGCEENYVEVLKRGYRDGGKALTRADANEILKRGFGGNVESGNKDWETKATDWQCEVERWALENPEYLEMARRAFQSHIRAYATHIAAERSMFNIKELHLGHLAKAFALRDRPSKINVPGLRQGKEETKKDFKAERNSAAGKKRKAGGADLADDIPSANNTATAAQKMRAKMKEHMAGANEFNLA.

Disordered stretches follow at residues 28–98 (TWRD…NQPR) and 110–130 (EPQKAEEVKEEGHVENAKPTN). Basic residues predominate over residues 35 to 45 (AKKIAKHHAKG). The segment covering 84-98 (GKQQSHGHPHSNQPR) has biased composition (polar residues). Residues 110–125 (EPQKAEEVKEEGHVEN) are compositionally biased toward basic and acidic residues. A Q motif motif is present at residues 138 to 167 (DTFTNLGLSPNLAAHLLTKLELKAPTAIQK). The 202-residue stretch at 171–372 (SQLLKEEGDA…EISLKDAVHI (202 aa)) folds into the Helicase ATP-binding domain. 184-191 (AETGSGKT) contributes to the ATP binding site. The DEAD box signature appears at 308-311 (DEGD). The Helicase C-terminal domain occupies 398-620 (QLKQSYAVVA…NVESGNKDWE (223 aa)). Composition is skewed to basic and acidic residues over residues 455–471 (KEDGGEPSDTDKSEEKP) and 697–709 (GKEETKKDFKAER). Disordered regions lie at residues 455–483 (KEDGGEPSDTDKSEEKPPSSPHGTIAPAT) and 697–745 (GKEE…RAKM).

Belongs to the DEAD box helicase family. DDX31/DBP7 subfamily.

The protein localises to the nucleus. Its subcellular location is the nucleolus. The enzyme catalyses ATP + H2O = ADP + phosphate + H(+). In terms of biological role, ATP-binding RNA helicase involved in the biogenesis of 60S ribosomal subunits and is required for the normal formation of 25S and 5.8S rRNAs. This Aspergillus fumigatus (strain ATCC MYA-4609 / CBS 101355 / FGSC A1100 / Af293) (Neosartorya fumigata) protein is ATP-dependent RNA helicase dbp7 (dbp7).